Here is a 1383-residue protein sequence, read N- to C-terminus: DNA-directed RNA polymerase subunit beta (1383 aa).

The protein belongs to the RNA polymerase beta chain family. As to quaternary structure, the RNAP catalytic core consists of 2 alpha, 1 beta, 1 beta' and 1 omega subunit. When a sigma factor is associated with the core the holoenzyme is formed, which can initiate transcription.

It catalyses the reaction RNA(n) + a ribonucleoside 5'-triphosphate = RNA(n+1) + diphosphate. Functionally, DNA-dependent RNA polymerase catalyzes the transcription of DNA into RNA using the four ribonucleoside triphosphates as substrates. This Xanthomonas euvesicatoria pv. vesicatoria (strain 85-10) (Xanthomonas campestris pv. vesicatoria) protein is DNA-directed RNA polymerase subunit beta.